The sequence spans 251 residues: uncharacterized protein (251 aa).

The protein belongs to the PaiB family.

This is an uncharacterized protein from Emericella nidulans (strain FGSC A4 / ATCC 38163 / CBS 112.46 / NRRL 194 / M139) (Aspergillus nidulans).